Reading from the N-terminus, the 239-residue chain is Major centromere autoantigen B (239 aa).

The segment at 28 to 185 is disordered; sequence AGFGGGPNAT…DDEVPVPSFG (158 aa). Phosphothreonine occurs at positions 37 and 39. 2 stretches are compositionally biased toward acidic residues: residues 46–117 and 148–179; these read GEEE…EAED and GEED…DDEV. Positions 176–239 are homodimerization; the sequence is DDEVPVPSFG…AGARGLGHQS (64 aa).

Antiparallel homodimer. Interacts with CENPT. Identified in a centromere complex containing histones H2A, H2B and H4, and at least CENPA, CENPB, CENPC, CENPT, CENPN, HJURP, SUPT16H, SSRP1 and RSF1. In terms of processing, poly-ADP-ribosylated by PARP1. Post-translationally, N-terminally methylated by METTL11A/NTM1. Alpha-N-methylation is stimulated in response extracellular stimuli, including increased cell density and heat shock, and seems to facilitate binding to CENP-B boxes. Chromatin-bound CENP-B is primarily trimethylated.

It is found in the nucleus. It localises to the chromosome. The protein localises to the centromere. Functionally, interacts with centromeric heterochromatin in chromosomes and binds to a specific 17 bp subset of alphoid satellite DNA, called the CENP-B box. May organize arrays of centromere satellite DNA into a higher-order structure which then directs centromere formation and kinetochore assembly in mammalian chromosomes. The polypeptide is Major centromere autoantigen B (CENPB) (Ovis aries (Sheep)).